The sequence spans 452 residues: tRNA modification GTPase MnmE (452 aa).

The (6S)-5-formyl-5,6,7,8-tetrahydrofolate site is built by arginine 25, glutamate 81, and lysine 120. The TrmE-type G domain occupies 216-375 (GITVVIAGEP…LKNHLKNTAG (160 aa)). Residue asparagine 226 participates in K(+) binding. Residues 226–231 (NVGKSS), 245–251 (TDIAGTT), and 270–273 (DTAG) each bind GTP. Serine 230 is a binding site for Mg(2+). The K(+) site is built by threonine 245, isoleucine 247, and threonine 250. Residue threonine 251 participates in Mg(2+) binding. Lysine 452 is a binding site for (6S)-5-formyl-5,6,7,8-tetrahydrofolate.

This sequence belongs to the TRAFAC class TrmE-Era-EngA-EngB-Septin-like GTPase superfamily. TrmE GTPase family. Homodimer. Heterotetramer of two MnmE and two MnmG subunits. Requires K(+) as cofactor.

The protein resides in the cytoplasm. Exhibits a very high intrinsic GTPase hydrolysis rate. Involved in the addition of a carboxymethylaminomethyl (cmnm) group at the wobble position (U34) of certain tRNAs, forming tRNA-cmnm(5)s(2)U34. The polypeptide is tRNA modification GTPase MnmE (Coxiella burnetii (strain Dugway 5J108-111)).